The sequence spans 180 residues: Large ribosomal subunit protein mL41 (180 aa).

The N-terminal 21 residues, 1 to 21 (MKLVLVSTRGVRSLNSTNFPA), are a transit peptide targeting the mitochondrion.

This sequence belongs to the mitochondrion-specific ribosomal protein mL41 family. As to quaternary structure, component of the mitochondrial ribosome large subunit (39S) which comprises a 16S rRNA and about 50 distinct proteins.

The protein localises to the mitochondrion. This Caenorhabditis elegans protein is Large ribosomal subunit protein mL41 (mrpl-41).